The following is a 292-amino-acid chain: High-affinity heme uptake system protein IsdE (292 aa).

The signal sequence occupies residues M1–S19. C20 carries N-palmitoyl cysteine lipidation. C20 carries the S-diacylglycerol cysteine lipid modification. In terms of domain architecture, Fe/B12 periplasmic-binding spans R35 to K291. Residues V41, A42, S60, Y61, M78, and H229 each contribute to the heme site.

This sequence belongs to the bacterial solute-binding protein 8 family. It depends on heme b as a cofactor.

The protein localises to the cell membrane. Functionally, involved in heme (porphyrin) scavenging. Binds Fe(2+) and Fe(3+) heme but the largest fraction is Fe(2+) heme. Functions as a high-affinity heme binding protein and probably has a role in relaying heme-iron from cell wall-anchored isd proteins receptors to the probable permease IsdF. This chain is High-affinity heme uptake system protein IsdE (isdE), found in Staphylococcus aureus (strain MRSA252).